Reading from the N-terminus, the 384-residue chain is Lipid-A-disaccharide synthase 1 (384 aa).

It belongs to the LpxB family.

It catalyses the reaction a lipid X + a UDP-2-N,3-O-bis[(3R)-3-hydroxyacyl]-alpha-D-glucosamine = a lipid A disaccharide + UDP + H(+). Its pathway is bacterial outer membrane biogenesis; LPS lipid A biosynthesis. In terms of biological role, condensation of UDP-2,3-diacylglucosamine and 2,3-diacylglucosamine-1-phosphate to form lipid A disaccharide, a precursor of lipid A, a phosphorylated glycolipid that anchors the lipopolysaccharide to the outer membrane of the cell. The protein is Lipid-A-disaccharide synthase 1 of Legionella pneumophila (strain Paris).